Reading from the N-terminus, the 290-residue chain is 6-phospho-5-dehydro-2-deoxy-D-gluconate aldolase (290 aa).

The active-site Proton donor is the Asp-85. Residues His-86 and His-180 each contribute to the Zn(2+) site. Position 181 (Gly-181) interacts with dihydroxyacetone phosphate. A Zn(2+)-binding site is contributed by His-208. Residues Gly-209 to Ser-211 and Asn-230 to Thr-233 each bind dihydroxyacetone phosphate. A Phosphothreonine modification is found at Thr-233.

This sequence belongs to the class II fructose-bisphosphate aldolase family. IolJ subfamily. Zn(2+) serves as cofactor.

The catalysed reaction is 6-phospho-5-dehydro-2-deoxy-D-gluconate = 3-oxopropanoate + dihydroxyacetone phosphate. Its pathway is polyol metabolism; myo-inositol degradation into acetyl-CoA; acetyl-CoA from myo-inositol: step 6/7. Its function is as follows. Produces dihydroxyacetone phosphate (DHAP or glycerone phosphate) and malonic semialdehyde (MSA or 3-oxopropanoate) from 6-phospho-5-dehydro-2-deoxy-D-gluconate (DKGP). This chain is 6-phospho-5-dehydro-2-deoxy-D-gluconate aldolase (iolJ), found in Bacillus subtilis (strain 168).